The primary structure comprises 130 residues: UPF0225 protein DR_0483 (130 aa).

It belongs to the UPF0225 family.

The sequence is that of UPF0225 protein DR_0483 from Deinococcus radiodurans (strain ATCC 13939 / DSM 20539 / JCM 16871 / CCUG 27074 / LMG 4051 / NBRC 15346 / NCIMB 9279 / VKM B-1422 / R1).